The sequence spans 266 residues: Large ribosomal subunit protein eL8 (266 aa).

Basic residues predominate over residues 1–11; sequence MPKGKKAKGKK. Disordered regions lie at residues 1–28 and 105–134; these read MPKG…KKVV and ETKQ…KRPP. Over residues 116–130 the composition is skewed to basic and acidic residues; sequence ARAEQKAAGKGDAPT.

Belongs to the eukaryotic ribosomal protein eL8 family. As to quaternary structure, component of the large ribosomal subunit.

It localises to the cytoplasm. In terms of biological role, component of the large ribosomal subunit. The ribosome is a large ribonucleoprotein complex responsible for the synthesis of proteins in the cell. The protein is Large ribosomal subunit protein eL8 (rpl7a) of Takifugu rubripes (Japanese pufferfish).